Reading from the N-terminus, the 427-residue chain is Enolase (427 aa).

Gln163 contacts (2R)-2-phosphoglycerate. The active-site Proton donor is the Glu205. Mg(2+) contacts are provided by Asp242, Glu285, and Asp312. Residues Lys337, Arg366, Ser367, and Lys388 each coordinate (2R)-2-phosphoglycerate. The active-site Proton acceptor is Lys337.

This sequence belongs to the enolase family. Mg(2+) is required as a cofactor.

The protein resides in the cytoplasm. The protein localises to the secreted. It is found in the cell surface. It carries out the reaction (2R)-2-phosphoglycerate = phosphoenolpyruvate + H2O. The protein operates within carbohydrate degradation; glycolysis; pyruvate from D-glyceraldehyde 3-phosphate: step 4/5. Functionally, catalyzes the reversible conversion of 2-phosphoglycerate (2-PG) into phosphoenolpyruvate (PEP). It is essential for the degradation of carbohydrates via glycolysis. This Leptothrix cholodnii (strain ATCC 51168 / LMG 8142 / SP-6) (Leptothrix discophora (strain SP-6)) protein is Enolase.